Consider the following 137-residue polypeptide: Small ribosomal subunit protein uS9 (137 aa).

Residues 105-137 (LKAEGYLTRDPRAKERKKYGLHKARKAPQYSKR) are disordered. Basic residues predominate over residues 118–137 (KERKKYGLHKARKAPQYSKR).

Belongs to the universal ribosomal protein uS9 family.

This chain is Small ribosomal subunit protein uS9 (rpsI), found in Synechocystis sp. (strain ATCC 27184 / PCC 6803 / Kazusa).